The sequence spans 202 residues: LexA repressor (202 aa).

A DNA-binding region (H-T-H motif) is located at residues 29-49; it reads VREICEATGLKSTSTVHGHLT. Active-site for autocatalytic cleavage activity residues include serine 126 and lysine 163.

It belongs to the peptidase S24 family. As to quaternary structure, homodimer.

It carries out the reaction Hydrolysis of Ala-|-Gly bond in repressor LexA.. Represses a number of genes involved in the response to DNA damage (SOS response), including recA and lexA. In the presence of single-stranded DNA, RecA interacts with LexA causing an autocatalytic cleavage which disrupts the DNA-binding part of LexA, leading to derepression of the SOS regulon and eventually DNA repair. The polypeptide is LexA repressor (Caldicellulosiruptor saccharolyticus (strain ATCC 43494 / DSM 8903 / Tp8T 6331)).